A 479-amino-acid chain; its full sequence is UDP-N-acetylmuramoyl-L-alanyl-D-glutamate--2,6-diaminopimelate ligase (479 aa).

Serine 21 provides a ligand contact to UDP-N-acetyl-alpha-D-muramoyl-L-alanyl-D-glutamate. Residue 98-104 (GTNGKSS) participates in ATP binding. Residues 144 to 145 (TT), serine 171, glutamine 177, and arginine 179 contribute to the UDP-N-acetyl-alpha-D-muramoyl-L-alanyl-D-glutamate site. Lysine 211 is modified (N6-carboxylysine). Meso-2,6-diaminopimelate contacts are provided by residues arginine 372, 396 to 399 (DNPR), glycine 446, and glutamate 450. The Meso-diaminopimelate recognition motif motif lies at 396–399 (DNPR).

The protein belongs to the MurCDEF family. MurE subfamily. Requires Mg(2+) as cofactor. In terms of processing, carboxylation is probably crucial for Mg(2+) binding and, consequently, for the gamma-phosphate positioning of ATP.

It is found in the cytoplasm. It carries out the reaction UDP-N-acetyl-alpha-D-muramoyl-L-alanyl-D-glutamate + meso-2,6-diaminopimelate + ATP = UDP-N-acetyl-alpha-D-muramoyl-L-alanyl-gamma-D-glutamyl-meso-2,6-diaminopimelate + ADP + phosphate + H(+). Its pathway is cell wall biogenesis; peptidoglycan biosynthesis. In terms of biological role, catalyzes the addition of meso-diaminopimelic acid to the nucleotide precursor UDP-N-acetylmuramoyl-L-alanyl-D-glutamate (UMAG) in the biosynthesis of bacterial cell-wall peptidoglycan. This Rickettsia rickettsii protein is UDP-N-acetylmuramoyl-L-alanyl-D-glutamate--2,6-diaminopimelate ligase.